The chain runs to 85 residues: Large ribosomal subunit protein bL27 (85 aa).

The tract at residues 1-23 is disordered; sequence MAHKKAGGSTRNGRDSESKRLGV.

The protein belongs to the bacterial ribosomal protein bL27 family.

The chain is Large ribosomal subunit protein bL27 from Thioalkalivibrio sulfidiphilus (strain HL-EbGR7).